The primary structure comprises 262 residues: Acetylglutamate kinase (262 aa).

Residues G48 to G49, R70, and N162 each bind substrate.

Belongs to the acetylglutamate kinase family. ArgB subfamily.

The protein resides in the cytoplasm. It catalyses the reaction N-acetyl-L-glutamate + ATP = N-acetyl-L-glutamyl 5-phosphate + ADP. It participates in amino-acid biosynthesis; L-arginine biosynthesis; N(2)-acetyl-L-ornithine from L-glutamate: step 2/4. In terms of biological role, catalyzes the ATP-dependent phosphorylation of N-acetyl-L-glutamate. This Vibrio cholerae serotype O1 (strain ATCC 39541 / Classical Ogawa 395 / O395) protein is Acetylglutamate kinase.